Here is a 354-residue protein sequence, read N- to C-terminus: MSKIRVLIVDDSALMRKYLREILEQDPEIEVIAVARNGREAVEKALELSPDVITMDINMPEMDGLTAIQYIMLHRPTPIIVISSLTQKGALTTFEALELGAVDYVAKPDGTVSLKIKEVAEEILQKVKAVAKSRGVVRLKARKERPFVQEVPKTRPVSPDTSFKKLILIGVSTGGPKALMEIIPRLPGNLDASVVIIQHMPEKFTASFAARLNNYSELYVKEAEDGESLERGKVLVARGGINLKLERKLGINVVRVRYTPLPRETIYWPSVDVAFRSALTVIEPHRIIAVLLTGMGDDGAQAMVEIKQKGGYTIAESEETAVVWGMPREAIERGGASEILPVYQIADRIVELVR.

The Response regulatory domain maps to 5-122; that stretch reads RVLIVDDSAL…SLKIKEVAEE (118 aa). A 4-aspartylphosphate modification is found at D56. In terms of domain architecture, CheB-type methylesterase spans 159 to 354; it reads PDTSFKKLIL…IADRIVELVR (196 aa). Residues S172, H199, and D298 contribute to the active site.

Belongs to the CheB family. Phosphorylated by CheA. Phosphorylation of the N-terminal regulatory domain activates the methylesterase activity.

Its subcellular location is the cytoplasm. The enzyme catalyses [protein]-L-glutamate 5-O-methyl ester + H2O = L-glutamyl-[protein] + methanol + H(+). The catalysed reaction is L-glutaminyl-[protein] + H2O = L-glutamyl-[protein] + NH4(+). Functionally, involved in chemotaxis. Part of a chemotaxis signal transduction system that modulates chemotaxis in response to various stimuli. Catalyzes the demethylation of specific methylglutamate residues introduced into the chemoreceptors (methyl-accepting chemotaxis proteins or MCP) by CheR. Also mediates the irreversible deamidation of specific glutamine residues to glutamic acid. This chain is Protein-glutamate methylesterase/protein-glutamine glutaminase 2, found in Carboxydothermus hydrogenoformans (strain ATCC BAA-161 / DSM 6008 / Z-2901).